The sequence spans 400 residues: Acetate kinase (400 aa).

Asn-10 contributes to the Mg(2+) binding site. Lys-17 contributes to the ATP binding site. Arg-91 serves as a coordination point for substrate. Asp-150 functions as the Proton donor/acceptor in the catalytic mechanism. ATP contacts are provided by residues His-210 to Gly-214, Asp-285 to Arg-287, and Gly-333 to Asn-337. A Mg(2+)-binding site is contributed by Glu-387.

This sequence belongs to the acetokinase family. Homodimer. Requires Mg(2+) as cofactor. Mn(2+) is required as a cofactor.

Its subcellular location is the cytoplasm. It carries out the reaction acetate + ATP = acetyl phosphate + ADP. It participates in metabolic intermediate biosynthesis; acetyl-CoA biosynthesis; acetyl-CoA from acetate: step 1/2. Functionally, catalyzes the formation of acetyl phosphate from acetate and ATP. Can also catalyze the reverse reaction. The polypeptide is Acetate kinase (Cronobacter sakazakii (strain ATCC BAA-894) (Enterobacter sakazakii)).